We begin with the raw amino-acid sequence, 93 residues long: Small ribosomal subunit protein uS19 (93 aa).

The protein belongs to the universal ribosomal protein uS19 family.

Functionally, protein S19 forms a complex with S13 that binds strongly to the 16S ribosomal RNA. This is Small ribosomal subunit protein uS19 from Kocuria rhizophila (strain ATCC 9341 / DSM 348 / NBRC 103217 / DC2201).